Consider the following 221-residue polypeptide: tRNA (guanine-N(7)-)-methyltransferase (221 aa).

S-adenosyl-L-methionine is bound by residues Glu-51, Glu-76, Asp-103, and Asp-125. Asp-125 is an active-site residue. Substrate is bound by residues Lys-129 and Asp-161.

This sequence belongs to the class I-like SAM-binding methyltransferase superfamily. TrmB family.

It carries out the reaction guanosine(46) in tRNA + S-adenosyl-L-methionine = N(7)-methylguanosine(46) in tRNA + S-adenosyl-L-homocysteine. The protein operates within tRNA modification; N(7)-methylguanine-tRNA biosynthesis. Catalyzes the formation of N(7)-methylguanine at position 46 (m7G46) in tRNA. This Wolbachia pipientis wMel protein is tRNA (guanine-N(7)-)-methyltransferase.